The sequence spans 58 residues: Bestoxin (58 aa).

The LCN-type CS-alpha/beta domain maps to 3 to 58; it reads VPGNYPLDKDGNTYTCLELGENKDCQKVCKLHGVQYGYCYAFSCWCKEYLDDKDSV. 3 cysteine pairs are disulfide-bonded: cysteine 18–cysteine 41, cysteine 27–cysteine 46, and cysteine 31–cysteine 48.

Expressed by the venom gland.

The protein localises to the secreted. Its function is as follows. Beta toxins bind voltage-independently at site-4 of sodium channels (Nav) and shift the voltage of activation toward more negative potentials thereby affecting sodium channel activation and promoting spontaneous and repetitive firing. In mice, causes intense writhing. The protein is Bestoxin of Parabuthus transvaalicus (Transvaal thick-tailed scorpion).